A 102-amino-acid polypeptide reads, in one-letter code: MVQAVSDNLISNAWVISCNPLALEVPERIGSTYFCFGGAIFILVAPLTNLVYNEDIVSQTRLYIYYRGSRDSRACMLDIVTLVDVSKRSKLVLLLQIYFFSF.

The chain crosses the membrane as a helical span at residues 29-52 (IGSTYFCFGGAIFILVAPLTNLVY).

It localises to the membrane. This is an uncharacterized protein from Saccharomyces cerevisiae (strain ATCC 204508 / S288c) (Baker's yeast).